Reading from the N-terminus, the 439-residue chain is GTPase Der (439 aa).

EngA-type G domains are found at residues 4 to 169 and 177 to 352; these read AMVS…PQEE and IKIA…EEYN. GTP contacts are provided by residues 10 to 17, 57 to 61, 120 to 123, 183 to 190, 230 to 234, and 295 to 298; these read GRPNVGKS, DTGGL, NKVD, GKPNVGKS, DTAGI, and NKWD. Residues 353-437 form the KH-like domain; it reads KRITTGLLNN…PVVISTRKRG (85 aa).

This sequence belongs to the TRAFAC class TrmE-Era-EngA-EngB-Septin-like GTPase superfamily. EngA (Der) GTPase family. Associates with the 50S ribosomal subunit.

In terms of biological role, GTPase that plays an essential role in the late steps of ribosome biogenesis. This Thermoanaerobacter pseudethanolicus (strain ATCC 33223 / 39E) (Clostridium thermohydrosulfuricum) protein is GTPase Der.